The sequence spans 338 residues: Tetraacyldisaccharide 4'-kinase (338 aa).

49-56 (TVGGTGKT) provides a ligand contact to ATP.

Belongs to the LpxK family.

It carries out the reaction a lipid A disaccharide + ATP = a lipid IVA + ADP + H(+). Its pathway is glycolipid biosynthesis; lipid IV(A) biosynthesis; lipid IV(A) from (3R)-3-hydroxytetradecanoyl-[acyl-carrier-protein] and UDP-N-acetyl-alpha-D-glucosamine: step 6/6. Its function is as follows. Transfers the gamma-phosphate of ATP to the 4'-position of a tetraacyldisaccharide 1-phosphate intermediate (termed DS-1-P) to form tetraacyldisaccharide 1,4'-bis-phosphate (lipid IVA). The sequence is that of Tetraacyldisaccharide 4'-kinase from Geobacter metallireducens (strain ATCC 53774 / DSM 7210 / GS-15).